The primary structure comprises 78 residues: RNA-binding protein KhpA (78 aa).

The KH domain maps to 29–78 (TIIYELTVAKGDIGKIIGKEGRTIKAIRTLLVSVASRDNVKVSLEIMEER).

It belongs to the KhpA RNA-binding protein family.

The protein resides in the cytoplasm. In terms of biological role, a probable RNA-binding protein. The protein is RNA-binding protein KhpA of Chlamydia trachomatis serovar D (strain ATCC VR-885 / DSM 19411 / UW-3/Cx).